The sequence spans 218 residues: NAD(P)H-quinone oxidoreductase subunit I (218 aa).

4Fe-4S ferredoxin-type domains lie at 55 to 84 (GRIH…VDWV) and 95 to 124 (RNYS…MTEE). [4Fe-4S] cluster-binding residues include C64, C67, C70, C74, C104, C107, C110, and C114. Residues 179–218 (LRAGKLPSQIIKELQADKSEEEGKNNSSDMVPNKLNSTNK) form a disordered region. Positions 192–202 (LQADKSEEEGK) are enriched in basic and acidic residues. Residues 203 to 218 (NNSSDMVPNKLNSTNK) are compositionally biased toward polar residues.

This sequence belongs to the complex I 23 kDa subunit family. In terms of assembly, NDH-1 is composed of at least 11 different subunits. Requires [4Fe-4S] cluster as cofactor.

It localises to the cellular thylakoid membrane. It carries out the reaction a plastoquinone + NADH + (n+1) H(+)(in) = a plastoquinol + NAD(+) + n H(+)(out). It catalyses the reaction a plastoquinone + NADPH + (n+1) H(+)(in) = a plastoquinol + NADP(+) + n H(+)(out). NDH-1 shuttles electrons from an unknown electron donor, via FMN and iron-sulfur (Fe-S) centers, to quinones in the respiratory and/or the photosynthetic chain. The immediate electron acceptor for the enzyme in this species is believed to be plastoquinone. Couples the redox reaction to proton translocation, and thus conserves the redox energy in a proton gradient. The protein is NAD(P)H-quinone oxidoreductase subunit I of Prochlorococcus marinus (strain NATL2A).